We begin with the raw amino-acid sequence, 498 residues long: Glutamate--tRNA ligase (498 aa).

The short motif at 10–20 (PSPTGYFHIGG) is the 'HIGH' region element. Positions 252 to 256 (KLSKR) match the 'KMSKS' region motif. An ATP-binding site is contributed by lysine 255.

It belongs to the class-I aminoacyl-tRNA synthetase family. Glutamate--tRNA ligase type 1 subfamily. In terms of assembly, monomer.

It is found in the cytoplasm. It carries out the reaction tRNA(Glu) + L-glutamate + ATP = L-glutamyl-tRNA(Glu) + AMP + diphosphate. Its function is as follows. Catalyzes the attachment of glutamate to tRNA(Glu) in a two-step reaction: glutamate is first activated by ATP to form Glu-AMP and then transferred to the acceptor end of tRNA(Glu). The chain is Glutamate--tRNA ligase from Mycoplasmoides gallisepticum (strain R(low / passage 15 / clone 2)) (Mycoplasma gallisepticum).